The following is a 345-amino-acid chain: MQKLTLTRPDDWHLHLRDGDALKAVLPHSARQFARAIVMPNLKPPVRTVADAADYRNRILAALPVGQTFEPLMTLYLTDNTSPEEISAAKASKFVKAVKYYPAGATTNSDFGVTDIRKCDRIFAAMEQEDIPLLLHGEVTDTNIDVFDREKVFIETHLIPLVSRFPKLRVVLEHITTSEAVTFVLNTNENIGATITPQHLLFSRNAIFKGGIRPHYYCLPILKREKHRQALLQAATSGNPKFFLGTDSAPHARNSKEQSCGCAGCYSALHAMELYAEAFESANALDKLEAFASFYGPDFYQLPRNTKTITLAKQTWQIPDEVPFPGTGLVPLRAGEEITWKIMDG.

Zn(2+) contacts are provided by H13 and H15. Substrate contacts are provided by residues 15–17 and N41; that span reads HLR. Zn(2+) contacts are provided by K99, H136, and H174. Position 99 is an N6-carboxylysine (K99). H136 is a substrate binding site. L219 is a substrate binding site. D247 contributes to the Zn(2+) binding site. Residue D247 is part of the active site. Residues H251 and A263 each contribute to the substrate site.

This sequence belongs to the metallo-dependent hydrolases superfamily. DHOase family. Class II DHOase subfamily. Homodimer. Zn(2+) serves as cofactor.

The enzyme catalyses (S)-dihydroorotate + H2O = N-carbamoyl-L-aspartate + H(+). Its pathway is pyrimidine metabolism; UMP biosynthesis via de novo pathway; (S)-dihydroorotate from bicarbonate: step 3/3. In terms of biological role, catalyzes the reversible cyclization of carbamoyl aspartate to dihydroorotate. This chain is Dihydroorotase, found in Acaryochloris marina (strain MBIC 11017).